A 465-amino-acid polypeptide reads, in one-letter code: Gamma-aminobutyric acid receptor subunit gamma-1 (465 aa).

An N-terminal signal peptide occupies residues 1–20; the sequence is MGSGKVFLFSPSLLWSQTRG. Residues 21 to 273 lie on the Extracellular side of the membrane; it reads VRLIFLLLTL…FDLSRRMGYF (253 aa). Residues asparagine 50 and asparagine 127 are each glycosylated (N-linked (GlcNAc...) asparagine). Cysteine 188 and cysteine 202 form a disulfide bridge. N-linked (GlcNAc...) asparagine glycosylation occurs at asparagine 245. A helical membrane pass occupies residues 274–294; that stretch reads TIQTYIPCILTVVLSWVSFWI. Over 295–300 the chain is Cytoplasmic; it reads NKDAVP. Residues 301–320 form a helical membrane-spanning segment; the sequence is ARTSLGITTVLTMTTLSTIA. Topologically, residues 321-328 are extracellular; sequence RKSLPKVS. Residues 329-349 traverse the membrane as a helical segment; sequence YVTAMDLFVSVCFIFVFAALM. Residues 350–444 are Cytoplasmic-facing; the sequence is EYGTLHYFTS…RIAKIDSYSR (95 aa). A helical transmembrane segment spans residues 445–465; it reads IFFPTAFALFNLVYWVGYLYL.

Belongs to the ligand-gated ion channel (TC 1.A.9) family. Gamma-aminobutyric acid receptor (TC 1.A.9.5) subfamily. GABRG1 sub-subfamily. As to quaternary structure, heteropentamer, formed by a combination of alpha (GABRA1-6), beta (GABRB1-3), gamma (GABRG1-3), delta (GABRD), epsilon (GABRE), rho (GABRR1-3), pi (GABRP) and theta (GABRQ) chains, each subunit exhibiting distinct physiological and pharmacological properties. In terms of processing, may be palmitoylated. In terms of tissue distribution, expressed in brain.

It is found in the postsynaptic cell membrane. The protein resides in the cell membrane. The enzyme catalyses chloride(in) = chloride(out). Its function is as follows. Gamma subunit of the heteropentameric ligand-gated chloride channel gated by gamma-aminobutyric acid (GABA), a major inhibitory neurotransmitter in the brain. GABA-gated chloride channels, also named GABA(A) receptors (GABAAR), consist of five subunits arranged around a central pore and contain GABA active binding site(s) located at the alpha and beta subunit interface(s). When activated by GABA, GABAARs selectively allow the flow of chloride anions across the cell membrane down their electrochemical gradient. Chloride influx into the postsynaptic neuron following GABAAR opening decreases the neuron ability to generate a new action potential, thereby reducing nerve transmission. This chain is Gamma-aminobutyric acid receptor subunit gamma-1, found in Rattus norvegicus (Rat).